The following is a 1082-amino-acid chain: uncharacterized protein (1082 aa).

Positions 50–319 constitute a PNPLA domain; sequence TTMTGGVSLA…LDNRPIGVLF (270 aa). A GXSXG motif is present at residues 120–124; that stretch reads GTSAG. Catalysis depends on serine 122, which acts as the Nucleophile. The Proton acceptor role is filled by aspartate 306. Residues 306 to 308 carry the DGA/G motif; that stretch reads DGG. The next 4 helical transmembrane spans lie at 959-979, 982-1002, 1012-1032, and 1057-1077; these read IARSTIIAGALLLVLGVAAAI, VTVFGVTGLIAAGTGGLLVVL, LFALLSFSVVGAVLALATPVV, and WWHPLVVVGLIALVAIMIAAA.

The protein resides in the cell membrane. This is an uncharacterized protein from Mycobacterium tuberculosis (strain ATCC 25618 / H37Rv).